The sequence spans 87 residues: Glutaredoxin (87 aa).

A Glutaredoxin domain is found at 1–87 (MFVVIFGRPG…LMKEQFGIVA (87 aa)). A disulfide bond links Cys11 and Cys14.

Belongs to the glutaredoxin family. In terms of assembly, monomer.

The protein resides in the cytoplasm. Functionally, has a glutathione-disulfide oxidoreductase activity in the presence of NADPH and glutathione reductase. Reduces low molecular weight disulfides and proteins. The sequence is that of Glutaredoxin (grxA) from Haemophilus influenzae (strain ATCC 51907 / DSM 11121 / KW20 / Rd).